A 76-amino-acid chain; its full sequence is Kappa-actitoxin-Avd4e (76 aa).

Positions 1–19 (MNKALFLCLVVLCAAVVFA) are cleaved as a signal peptide. A propeptide spanning residues 20 to 31 (AEDLQKAKHAPF) is cleaved from the precursor. Disulfide bonds link cysteine 37-cysteine 72, cysteine 39-cysteine 65, and cysteine 55-cysteine 73. A Cell attachment site motif is present at residues 45–47 (RGD).

Belongs to the sea anemone type 3 (BDS) potassium channel toxin family. As to expression, moderately expressed in the ectodermal tissue from the distal and proximal tentacles, body wall, and oral disk.

It localises to the secreted. The protein localises to the nematocyst. Functionally, is member of a fraction that shows antiangiogenic activity, since it inhibits human microvascular endothelial cells (HMEC) tubulogenesis. This protein could be a kunitz-type inhibitor with a RGD motif that could block angiogenesis in binding on integrins. Blocks Kv3 voltage-gated potassium channels. Reduces blood pressure. The chain is Kappa-actitoxin-Avd4e from Anemonia viridis (Snakelocks anemone).